The sequence spans 203 residues: Gramillins biosynthetic cluster protein FGSG_00038 (203 aa).

Its pathway is mycotoxin biosynthesis. Part of the gene cluster that mediates the biosynthesis of gramillins A and B, bicyclic lipopeptides that induce cell death in maize leaves but not in wheat leaves. The nonribosomal peptide synthetase GRA1 incorporates respectively a glutamic adic (Glu), a leucine (Leu), a serine (Ser), a hydroxyglutamine (HOGln), a 2-amino decanoic acid, and 2 cysteins (CysB and CysA). The biosynthesis of 2-amino decanoic acid incorporated in gramillins could be initiated by a fatty acid synthase composed of the alpha and beta subunits FGSG_00036 and FGSG_11656. The cytochrome P450 monooxygenase FGSG_15680 could hydroxylate the fatty acid chain. Subsequent oxidation to the ketone by the oxidoreductase FGSG_00048 and transamination by aminotransferase FGSG_00049 could form 2-amino-decanoic acid. On the other hand, FGSG_15680 could also be responsible for the HO-modified glutamine at the gamma-position. Whether hydroxylation occurs on the fully assembled product or on the Gln residue prior to assembly into the gramillins requires further proof. The thioredoxin FGSG_00043 could also be required for the disulfide-bond formation between CysA and CysB. The specific involvement of the remaining proteins from the cluster is more difficult to discern, but could have broader regulatory (FGSG_00040 and FGSG_11657) or enzymatic functions (FGSG_00044 and FGSG_00045). The final C-domain of GRA1 does not possess the expected sequence of a termination CT domain, often implicated in macrocyclization and release of a cyclopeptidein fungal NRPs; and the thioesterase FGSG_00047 may act in concert with the terminal C-domain of GRA1 to catalyze the formation of the macrocyclic anhydride and release of the products. The polypeptide is Gramillins biosynthetic cluster protein FGSG_00038 (Gibberella zeae (strain ATCC MYA-4620 / CBS 123657 / FGSC 9075 / NRRL 31084 / PH-1) (Wheat head blight fungus)).